We begin with the raw amino-acid sequence, 302 residues long: Probable lipid kinase YegS-like (302 aa).

Residues 1 to 129 (MDKDKVLLVL…IDLGAVNGKL (129 aa)) form the DAGKc domain. Residues T39, 65 to 71 (GDGTLRE), and T92 contribute to the ATP site. The Mg(2+) site is built by R210, D213, and L215. E268 serves as the catalytic Proton acceptor.

It belongs to the diacylglycerol/lipid kinase family. YegS lipid kinase subfamily. It depends on Mg(2+) as a cofactor. The cofactor is Ca(2+).

The protein resides in the cytoplasm. Its function is as follows. Probably phosphorylates lipids; the in vivo substrate is unknown. This chain is Probable lipid kinase YegS-like, found in Pseudomonas aeruginosa (strain UCBPP-PA14).